The sequence spans 291 residues: Protease HtpX homolog (291 aa).

The next 2 helical transmembrane spans lie at 4 to 24 (VVLF…SARV) and 38 to 58 (MGML…ISLL). A Zn(2+)-binding site is contributed by His-144. The active site involves Glu-145. Zn(2+) is bound at residue His-148. Helical transmembrane passes span 159 to 179 (LIQG…AYAI) and 199 to 219 (ISSI…VMYF). Glu-224 provides a ligand contact to Zn(2+).

Belongs to the peptidase M48B family. Zn(2+) serves as cofactor.

The protein resides in the cell inner membrane. The protein is Protease HtpX homolog of Chlorobium phaeobacteroides (strain DSM 266 / SMG 266 / 2430).